We begin with the raw amino-acid sequence, 438 residues long: Carboxypeptidase A6 (438 aa).

Positions 1–30 (MNFLGNPRSHTAAFLPVCWLLLNILKPGHC) are cleaved as a signal peptide. Positions 31–129 (HSYDNRYAGD…NSLQTQRNRR (99 aa)) are cleaved as a propeptide — activation peptide. N-linked (GlcNAc...) asparagine glycans are attached at residues Asn89 and Asn153. In terms of domain architecture, Peptidase M14 spans 138 to 433 (VYHSLEDIQS…LAVKNITMHL (296 aa)). 2 residues coordinate Zn(2+): His197 and Glu200. Substrate-binding positions include 197–200 (HARE), Arg255, and 272–273 (NR). Cys266 and Cys289 form a disulfide bridge. His325 contributes to the Zn(2+) binding site. 326–327 (AY) is a substrate binding site. Asn344 carries an N-linked (GlcNAc...) asparagine glycan. Residue Tyr377 coordinates substrate. The active-site Proton donor/acceptor is the Glu399. N-linked (GlcNAc...) asparagine glycosylation is present at Asn428.

It belongs to the peptidase M14 family. Zn(2+) serves as cofactor. As to expression, in brain, highly expressed in the olfactory bulb with lower levels in other regions including cerebral cortex, hippocampus, hypothalamus, striatum and medulla. Within the olfactory bulb, highest levels occur in the mitral and granular layers with lower levels in the internal and external plexiform layers. Moderate levels are found in the epididymis with low levels in colon and spleen. Not detected in adrenal, liver, lung, ovary or testis. At embryonic day 14.5, enriched in eye, ear, osteoblasts, stomach, skin, dorsal root ganglia and throughout the CNS.

It is found in the secreted. The protein resides in the extracellular space. It localises to the extracellular matrix. Its function is as follows. May be involved in the proteolytic inactivation of enkephalins and neurotensin in some brain areas. May convert inactive angiotensin I into the biologically active angiotensin II. Releases a C-terminal amino acid, with preference for large hydrophobic C-terminal amino acids and shows only very weak activity toward small amino acids and histidine. This chain is Carboxypeptidase A6 (Cpa6), found in Mus musculus (Mouse).